The following is a 496-amino-acid chain: Lysine--tRNA ligase (496 aa).

Residues E403 and E410 each coordinate Mg(2+).

Belongs to the class-II aminoacyl-tRNA synthetase family. As to quaternary structure, homodimer. Mg(2+) serves as cofactor.

The protein resides in the cytoplasm. The enzyme catalyses tRNA(Lys) + L-lysine + ATP = L-lysyl-tRNA(Lys) + AMP + diphosphate. This Aster yellows witches'-broom phytoplasma (strain AYWB) protein is Lysine--tRNA ligase.